Here is a 114-residue protein sequence, read N- to C-terminus: Ribosome-binding factor A (114 aa).

The protein belongs to the RbfA family. In terms of assembly, monomer. Binds 30S ribosomal subunits, but not 50S ribosomal subunits or 70S ribosomes.

The protein localises to the cytoplasm. One of several proteins that assist in the late maturation steps of the functional core of the 30S ribosomal subunit. Associates with free 30S ribosomal subunits (but not with 30S subunits that are part of 70S ribosomes or polysomes). Required for efficient processing of 16S rRNA. May interact with the 5'-terminal helix region of 16S rRNA. This chain is Ribosome-binding factor A, found in Listeria innocua serovar 6a (strain ATCC BAA-680 / CLIP 11262).